We begin with the raw amino-acid sequence, 624 residues long: Probable Xaa-Pro aminopeptidase P (624 aa).

Residues Asp414, Asp425, Glu530, and Glu544 each contribute to the Mn(2+) site.

This sequence belongs to the peptidase M24B family. The cofactor is Mn(2+).

The enzyme catalyses Release of any N-terminal amino acid, including proline, that is linked to proline, even from a dipeptide or tripeptide.. Functionally, catalyzes the removal of a penultimate prolyl residue from the N-termini of peptides. This Chaetomium globosum (strain ATCC 6205 / CBS 148.51 / DSM 1962 / NBRC 6347 / NRRL 1970) (Soil fungus) protein is Probable Xaa-Pro aminopeptidase P (AMPP).